The sequence spans 126 residues: Glycine--tRNA ligase beta subunit (126 aa).

It belongs to the class-II aminoacyl-tRNA synthetase family. As to quaternary structure, tetramer of two alpha and two beta subunits.

The protein localises to the cytoplasm. The catalysed reaction is tRNA(Gly) + glycine + ATP = glycyl-tRNA(Gly) + AMP + diphosphate. The chain is Glycine--tRNA ligase beta subunit (glyS) from Neisseria gonorrhoeae.